Consider the following 128-residue polypeptide: Secreted RxLR effector protein 57 (128 aa).

An N-terminal signal peptide occupies residues 1-31; the sequence is MHRKRLRVVLSATLLDLITCVQLMLDPLVRS. The RxLR motif lies at 58–61; sequence RILR.

The protein belongs to the RxLR effector family.

It localises to the secreted. Its subcellular location is the host nucleus. The protein localises to the host cytoplasm. Its function is as follows. Secreted effector that completely suppresses the host cell death induced by cell death-inducing proteins. This Plasmopara viticola (Downy mildew of grapevine) protein is Secreted RxLR effector protein 57.